We begin with the raw amino-acid sequence, 617 residues long: Leucine aminopeptidase 2 (617 aa).

Residues 139-141 (QCQ) and 271-276 (PYGGME) each bind a peptide. A Zn(2+)-binding site is contributed by His-300. Glu-301 (proton acceptor) is an active-site residue. Zn(2+) is bound by residues His-304 and Glu-323. Tyr-388 (proton donor) is an active-site residue.

This sequence belongs to the peptidase M1 family. Requires Zn(2+) as cofactor.

It is found in the cytoplasm. The protein localises to the nucleus. The catalysed reaction is an epoxide + H2O = an ethanediol. Aminopeptidase that preferentially cleaves di- and tripeptides. Also has low epoxide hydrolase activity (in vitro). Can hydrolyze the epoxide leukotriene LTA(4) but it forms preferentially 5,6-dihydroxy-7,9,11,14-eicosatetraenoic acid rather than the cytokine leukotriene B(4) as the product compared to the homologous mammalian enzyme (in vitro). This chain is Leucine aminopeptidase 2, found in Aspergillus terreus (strain NIH 2624 / FGSC A1156).